A 682-amino-acid chain; its full sequence is MSEPRKILVTSALPYANGSIHLGHMLEYIQTDMWVRFQKHRGNQCIYVCADDAHGSAIMLRAEKEGITPEQLIANVKAEHSADFADFLVEFDNFHSTHSDENRELSSMIYKRLRDAGHIATRSVTQYFDPEKKMFLADRFIKGTCPKCAAEDQYGDNCEKCGATYAPTDLKDPKSAISGATPVLKDSKHFFFDLPAFDAMLKSWTRSGTLQDAVANKIAEWLDSGLQQWDISRDAPYFGFEIPDEPGKYFYVWLDAPIGYMASFKNLCARRPDLDFDAYWGKGATTELYHFIGKDIVNFHALFWPAMLEGAELRTPTGINVHGYLTVNGQKMSKSRGTFIKARTYLDHLPPEYLRYYYASKLGRGVDDLDLNLEDFVQKVNSDLIGKVVNIASRCAGFIHKGNAGVMVEANAAPELTDAFLTAAPSIADAYEARDFARAMRETMALADRANAYIAEKAPWALAKQEGRQDEVQAVCALGINLFRQLVIFLKPVLPNLAADAEKFLNVEPLTWEDHKTLLANHQLNPFSALMTRIDPVKVEAMATASKEDLTATDSSADTAPAGNGELAKDPLSAEIDFDAFAAIDLRVALILKAEHVEGADKLLRLTLDIGDEQRNVFSGIKSAYPNPSELEGRLTMMIANLKPRKMRFGISQGMVMAAGPGGEEIYLLSPDSGARPGQRIK.

Positions 14-24 match the 'HIGH' region motif; the sequence is PYANGSIHLGH. Residues C145, C148, C158, and C161 each coordinate Zn(2+). The 'KMSKS' region signature appears at 331-335; it reads KMSKS. K334 contributes to the ATP binding site. Residues 580 to 682 form the tRNA-binding domain; the sequence is AFAAIDLRVA…SGARPGQRIK (103 aa).

It belongs to the class-I aminoacyl-tRNA synthetase family. MetG type 1 subfamily. As to quaternary structure, homodimer. Zn(2+) serves as cofactor.

Its subcellular location is the cytoplasm. It catalyses the reaction tRNA(Met) + L-methionine + ATP = L-methionyl-tRNA(Met) + AMP + diphosphate. In terms of biological role, is required not only for elongation of protein synthesis but also for the initiation of all mRNA translation through initiator tRNA(fMet) aminoacylation. The chain is Methionine--tRNA ligase from Pseudomonas syringae pv. syringae (strain B728a).